We begin with the raw amino-acid sequence, 380 residues long: Probable pectin lyase A (380 aa).

A signal peptide spans 1-20 (MRYTSLFTAVTAALASTAAA). Cystine bridges form between cysteine 83/cysteine 102 and cysteine 92/cysteine 226. Asparagine 129 is a glycosylation site (N-linked (GlcNAc...) asparagine). Residue arginine 256 is part of the active site. Cysteine 323 and cysteine 331 are joined by a disulfide.

The protein belongs to the polysaccharide lyase 1 family.

Its subcellular location is the secreted. The catalysed reaction is Eliminative cleavage of (1-&gt;4)-alpha-D-galacturonan methyl ester to give oligosaccharides with 4-deoxy-6-O-methyl-alpha-D-galact-4-enuronosyl groups at their non-reducing ends.. Functionally, pectinolytic enzymes consist of four classes of enzymes: pectin lyase, polygalacturonase, pectin methylesterase and rhamnogalacturonase. Among pectinolytic enzymes, pectin lyase is the most important in depolymerization of pectin, since it cleaves internal glycosidic bonds of highly methylated pectins. In Aspergillus fumigatus (strain ATCC MYA-4609 / CBS 101355 / FGSC A1100 / Af293) (Neosartorya fumigata), this protein is Probable pectin lyase A (pelA).